Here is a 29-residue protein sequence, read N- to C-terminus: Amelogenin-like protein (29 aa).

Serine 16 bears the Phosphoserine mark.

The protein belongs to the amelogenin family.

It localises to the secreted. Its subcellular location is the extracellular space. It is found in the extracellular matrix. Functionally, tooth enamel proteins are produced in ameloblasts and play a role in biomineralization. This chain is Amelogenin-like protein (AMEL), found in Oryctolagus cuniculus (Rabbit).